Here is a 230-residue protein sequence, read N- to C-terminus: Thymidylate synthase 1 (230 aa).

DUMP is bound at residue 92-93 (RR). Cys112 serves as the catalytic Nucleophile. DUMP contacts are provided by residues 132-135 (RSND), Asn143, and 173-175 (HVY). Asp135 is a (6R)-5,10-methylene-5,6,7,8-tetrahydrofolate binding site.

This sequence belongs to the thymidylate synthase family. Bacterial-type ThyA subfamily. Homodimer.

Its subcellular location is the cytoplasm. It carries out the reaction dUMP + (6R)-5,10-methylene-5,6,7,8-tetrahydrofolate = 7,8-dihydrofolate + dTMP. Its pathway is pyrimidine metabolism; dTTP biosynthesis. Catalyzes the reductive methylation of 2'-deoxyuridine-5'-monophosphate (dUMP) to 2'-deoxythymidine-5'-monophosphate (dTMP) while utilizing 5,10-methylenetetrahydrofolate (mTHF) as the methyl donor and reductant in the reaction, yielding dihydrofolate (DHF) as a by-product. This enzymatic reaction provides an intracellular de novo source of dTMP, an essential precursor for DNA biosynthesis. In Bacillus amyloliquefaciens (Bacillus velezensis), this protein is Thymidylate synthase 1.